Consider the following 239-residue polypeptide: dITP/XTP pyrophosphatase (239 aa).

7–12 contacts substrate; that stretch reads THNEGK. Residue D74 is the Proton acceptor of the active site. D74 provides a ligand contact to Mg(2+). Residues S75, 182 to 185, K214, and 219 to 220 contribute to the substrate site; these read FGYD and HR.

It belongs to the HAM1 NTPase family. In terms of assembly, homodimer. Mg(2+) serves as cofactor.

The catalysed reaction is XTP + H2O = XMP + diphosphate + H(+). The enzyme catalyses dITP + H2O = dIMP + diphosphate + H(+). It carries out the reaction ITP + H2O = IMP + diphosphate + H(+). In terms of biological role, pyrophosphatase that catalyzes the hydrolysis of nucleoside triphosphates to their monophosphate derivatives, with a high preference for the non-canonical purine nucleotides XTP (xanthosine triphosphate), dITP (deoxyinosine triphosphate) and ITP. Seems to function as a house-cleaning enzyme that removes non-canonical purine nucleotides from the nucleotide pool, thus preventing their incorporation into DNA/RNA and avoiding chromosomal lesions. The chain is dITP/XTP pyrophosphatase from Bifidobacterium animalis subsp. lactis (strain AD011).